A 504-amino-acid chain; its full sequence is Ribose import ATP-binding protein RbsA (504 aa).

2 ABC transporter domains span residues 6–242 (LELK…VGRR) and 252–495 (VRHG…VGKT). 38–45 (GENGAGKS) contributes to the ATP binding site.

This sequence belongs to the ABC transporter superfamily. Ribose importer (TC 3.A.1.2.1) family. In terms of assembly, the complex is composed of an ATP-binding protein (RbsA), two transmembrane proteins (RbsC) and a solute-binding protein (RbsB).

It is found in the cell inner membrane. It catalyses the reaction D-ribose(out) + ATP + H2O = D-ribose(in) + ADP + phosphate + H(+). Functionally, part of the ABC transporter complex RbsABC involved in ribose import. Responsible for energy coupling to the transport system. The polypeptide is Ribose import ATP-binding protein RbsA (Photobacterium profundum (strain SS9)).